Consider the following 355-residue polypeptide: S-adenosylmethionine:tRNA ribosyltransferase-isomerase (355 aa).

The protein belongs to the QueA family. As to quaternary structure, monomer.

It is found in the cytoplasm. It catalyses the reaction 7-aminomethyl-7-carbaguanosine(34) in tRNA + S-adenosyl-L-methionine = epoxyqueuosine(34) in tRNA + adenine + L-methionine + 2 H(+). It functions in the pathway tRNA modification; tRNA-queuosine biosynthesis. Its function is as follows. Transfers and isomerizes the ribose moiety from AdoMet to the 7-aminomethyl group of 7-deazaguanine (preQ1-tRNA) to give epoxyqueuosine (oQ-tRNA). The polypeptide is S-adenosylmethionine:tRNA ribosyltransferase-isomerase (Burkholderia ambifaria (strain ATCC BAA-244 / DSM 16087 / CCUG 44356 / LMG 19182 / AMMD) (Burkholderia cepacia (strain AMMD))).